Reading from the N-terminus, the 245-residue chain is MAPK-interacting and spindle-stabilizing protein-like (245 aa).

The disordered stretch occupies residues 1–245; it reads MSDEFSLADA…PMPGGPHSYH (245 aa). An N-acetylserine modification is found at Ser-2. Phosphoserine is present on residues Ser-2, Ser-6, and Ser-15. Over residues 17–26 the composition is skewed to polar residues; sequence AKTSAVSNTK. Over residues 34–51 the composition is skewed to low complexity; the sequence is WPGSNPWNNPSAPSSVPS. Composition is skewed to pro residues over residues 74–127, 164–190, and 198–207; these read SVPP…PELP, PNMP…PPVP, and AWGPPAPYPA.

It belongs to the MISS family.

The protein is MAPK-interacting and spindle-stabilizing protein-like (MAPK1IP1L) of Homo sapiens (Human).